Reading from the N-terminus, the 231-residue chain is NADH-ubiquinone oxidoreductase chain 4 (231 aa).

The next 6 helical transmembrane spans lie at 1–21 (PIAG…YGII), 34–54 (MFLP…LTCL), 63–85 (IAYS…TPWG), 89–111 (GMTL…NTTY), 118–138 (ILIL…WWLL), and 156–176 (LLIM…LGLS).

It belongs to the complex I subunit 4 family.

It is found in the mitochondrion membrane. The enzyme catalyses a ubiquinone + NADH + 5 H(+)(in) = a ubiquinol + NAD(+) + 4 H(+)(out). Its function is as follows. Core subunit of the mitochondrial membrane respiratory chain NADH dehydrogenase (Complex I) that is believed to belong to the minimal assembly required for catalysis. Complex I functions in the transfer of electrons from NADH to the respiratory chain. The immediate electron acceptor for the enzyme is believed to be ubiquinone. The chain is NADH-ubiquinone oxidoreductase chain 4 (MT-ND4) from Calloselasma rhodostoma (Malayan pit viper).